Consider the following 1038-residue polypeptide: Importin-7 (1038 aa).

Met1 carries the N-acetylmethionine modification. An Importin N-terminal domain is found at 22-101 (AERQLNEAHK…RENIVEAIIH (80 aa)). The interval 881-910 (EHENDSDDDEDAEDDDETEELGSDEDDIDE) is disordered. A compositionally biased stretch (acidic residues) spans 884–910 (NDSDDDEDAEDDDETEELGSDEDDIDE). Phosphoserine is present on Ser886. Thr898 carries the post-translational modification Phosphothreonine. 2 positions are modified to phosphoserine: Ser903 and Ser1020.

This sequence belongs to the importin beta family. In terms of assembly, forms a heterodimer with KPNB1. Interacts with histone H1. Interacts with H2A, H2B, H3 and H4 histones. Interacts with SNUPN and XPO1. Interacts with RPS7 and RPL5. Interacts with RPL23A (via BIB domain). Binds directly to nuclear pore complexes. Interacts with SMAD4 and NUP93; translocates SMAD4 to the nucleus through the NPC upon BMP7 stimulation resulting in activation of SMAD4 signaling. Interacts with phosphorylated SMAD2; the interaction facilitates translocation of SMAD2 to the nucleus. Interacts with SRP19. Interacts with RUNX2; the interaction inhibits RUNX2 nuclear translocation in osteoblasts. Interacts with HDAC6, DLX3 and KLF4; the interaction facilitates HDAC6, DLX3 and KLF4 nuclear translocation in dental papilla cells.

Its subcellular location is the cytoplasm. The protein resides in the nucleus. In terms of biological role, functions in nuclear protein import, either by acting as autonomous nuclear transport receptor or as an adapter-like protein in association with the importin-beta subunit KPNB1. Acting autonomously is thought to serve itself as receptor for nuclear localization signals (NLS) and to promote translocation of import substrates through the nuclear pore complex (NPC) by an energy requiring, Ran-dependent mechanism. At the nucleoplasmic side of the NPC, Ran binds to importin, the importin/substrate complex dissociates and importin is re-exported from the nucleus to the cytoplasm where GTP hydrolysis releases Ran. Mediates autonomously the nuclear import of ribosomal proteins RPL23A, RPS7 and RPL5. In association with KPNB1 mediates the nuclear import of H1 histone and the Ran-binding site of IPO7 is not required but synergizes with that of KPNB1 in importin/substrate complex dissociation. Promotes odontoblast differentiation via promoting nuclear translocation of DLX3, KLF4, SMAD2, thereby facilitating the transcription of target genes that play a role in odontoblast differentiation. Facilitates BMP4-induced translocation of SMAD1 to the nucleus and recruitment to the MSX1 gene promoter, thereby promotes the expression of the odontogenic regulator MSX1 in dental mesenchymal cells. Also promotes odontoblast differentiation by facilitating the nuclear translocation of HDAC6 and subsequent repression of RUNX2 expression. Inhibits osteoblast differentiation by inhibiting nuclear translocation of RUNX2 and therefore inhibition of RUNX2 target gene transcription. In vitro, mediates nuclear import of H2A, H2B, H3 and H4 histones. This chain is Importin-7 (Ipo7), found in Mus musculus (Mouse).